A 607-amino-acid chain; its full sequence is Large ribosomal subunit assembly factor BipA (607 aa).

In terms of domain architecture, tr-type G spans 3–198 (EKLRNIAIIA…AIVDHVPAPD (196 aa)). Residues 15 to 20 (DHGKTT) and 128 to 131 (NKVD) contribute to the GTP site.

The protein belongs to the TRAFAC class translation factor GTPase superfamily. Classic translation factor GTPase family. BipA subfamily. In terms of assembly, monomer.

The protein resides in the cytoplasm. It catalyses the reaction GTP + H2O = GDP + phosphate + H(+). In terms of biological role, a 50S ribosomal subunit assembly protein with GTPase activity, required for 50S subunit assembly at low temperatures, may also play a role in translation. Binds GTP and analogs. Binds the 70S ribosome between the 30S and 50S subunits, in a similar position as ribosome-bound EF-G; it contacts a number of ribosomal proteins, both rRNAs and the A-site tRNA. This is Large ribosomal subunit assembly factor BipA from Shigella flexneri.